The primary structure comprises 539 residues: Glycerophosphoinositol inositolphosphodiesterase GDPD2 (539 aa).

Residues 1–40 (MADSPGCCSIWARCLHCLYSCHWRKYPKQKMQTSKCDCIW) lie on the Cytoplasmic side of the membrane. Residues 41–61 (FGLLFLTFLLSLGWLYIGLIL) form a helical membrane-spanning segment. Over 62-83 (LNDLHNFNEFLFRHWGHWMDWS) the chain is Extracellular. A helical transmembrane segment spans residues 84–104 (LIVLLVVSLLVTYASLLLLLG). The Cytoplasmic segment spans residues 105–121 (LLLQLCGQPLHLHSLHK). Residues 122-142 (VLLLLIVLLVAAGLVGLDIQW) traverse the membrane as a helical segment. Over 143–154 (RQEWHSLRLSLQ) the chain is Extracellular. The helical transmembrane segment at 155–175 (ATAPFLHIGAVAGITLLAWPV) threads the bilayer. Topologically, residues 176–189 (ADTFYRIHPRGPKV) are cytoplasmic. The helical transmembrane segment at 190–210 (LLLLLFFGVTLVIYLMPLLFI) threads the bilayer. The Extracellular portion of the chain corresponds to 211 to 491 (SSPCIMKLRD…PLWLLPPQKY (281 aa)). The region spanning 225–480 (PGLVGHRGAP…NACQLLQQMQ (256 aa)) is the GP-PDE domain. Residues E257, D259, and H272 each coordinate a divalent metal cation. An N-linked (GlcNAc...) asparagine glycan is attached at N333. The chain crosses the membrane as a helical span at residues 492–512 (LMIWVITDCASILLLLSIFLL). The Cytoplasmic portion of the chain corresponds to 513 to 539 (RGGCAKRNRTGLETAVLLTKINNFASE).

This sequence belongs to the glycerophosphoryl diester phosphodiesterase family. The cofactor is Ca(2+). As to expression, detected in spleen, femur and calvaria.

The protein localises to the cell membrane. It localises to the cytoplasm. The protein resides in the cytoskeleton. It carries out the reaction sn-glycero-3-phospho-1D-myo-inositol + H2O = 1D-myo-inositol 1-phosphate + glycerol + H(+). Functionally, has glycerophosphoinositol inositolphosphodiesterase activity and specifically hydrolyzes glycerophosphoinositol, with no activity for other substrates such as glycerophosphoinositol 4-phosphate, glycerophosphocholine, glycerophosphoethanolamine, and glycerophosphoserine. Accelerates the program of osteoblast differentiation and growth. May play a role in remodeling of the actin cytoskeleton. The protein is Glycerophosphoinositol inositolphosphodiesterase GDPD2 (Gdpd2) of Mus musculus (Mouse).